A 78-amino-acid chain; its full sequence is Vacuolar ATPase assembly integral membrane protein VMA21 (78 aa).

At 1-14 (MPADIPKSVVQKLV) the chain is on the cytoplasmic side. A helical transmembrane segment spans residues 15 to 35 (FFTAAMIICPVATFFICQYLF). Residues 36 to 38 (SNN) are Lumenal-facing. Residues 39–59 (AIISGGVSALVANIVLIGYVV) traverse the membrane as a helical segment. Residues 60 to 78 (AAFMEDTTEQEPEETKKSR) lie on the Cytoplasmic side of the membrane. Positions 75 to 78 (KKSR) match the Prevents secretion from ER motif.

Belongs to the VMA21 family.

It is found in the endoplasmic reticulum membrane. It localises to the endoplasmic reticulum-Golgi intermediate compartment membrane. The protein resides in the cytoplasmic vesicle. The protein localises to the COPII-coated vesicle membrane. Its function is as follows. Required for the assembly of the V0 complex of the vacuolar ATPase (V-ATPase) in the endoplasmic reticulum. The polypeptide is Vacuolar ATPase assembly integral membrane protein VMA21 (Debaryomyces hansenii (strain ATCC 36239 / CBS 767 / BCRC 21394 / JCM 1990 / NBRC 0083 / IGC 2968) (Yeast)).